Consider the following 24-residue polypeptide: Lectin (24 aa).

Positions 1 to 18 are enriched in polar residues; the sequence is AEEQSFSSTKFSTDQPNL. Positions 1 to 24 are disordered; sequence AEEQSFSSTKFSTDQPNLILQGDA.

Belongs to the leguminous lectin family. As to quaternary structure, homotetramer.

The protein is Lectin of Crotalaria juncea (Sunn hemp).